A 153-amino-acid chain; its full sequence is Protein-export protein SecB (153 aa).

Belongs to the SecB family. Homotetramer, a dimer of dimers. One homotetramer interacts with 1 SecA dimer.

The protein resides in the cytoplasm. Functionally, one of the proteins required for the normal export of preproteins out of the cell cytoplasm. It is a molecular chaperone that binds to a subset of precursor proteins, maintaining them in a translocation-competent state. It also specifically binds to its receptor SecA. This chain is Protein-export protein SecB, found in Edwardsiella ictaluri (strain 93-146).